The following is a 393-amino-acid chain: Polygalacturonase (393 aa).

The signal sequence occupies residues 1-23 (MANRRSLFSLSLIFVFMINSAIA). PbH1 repeat units follow at residues 115 to 136 (VNGVTISGGILDGQGTALWACK), 178 to 204 (FQNVQMQGVRVSRSGNSPNTDGIHVQM), 205 to 226 (SSGVTILNSKIATGDDCVSIGP), 228 to 248 (TSNLWIEGVACGPGHGISIGS), 258 to 279 (VQNVTVKTVTFSGTQNGLRIKS), and 288 to 309 (ARNILFQHATMVNVENPIVIDQ). The active-site Proton donor is Asp-219. The cysteines at positions 221 and 238 are disulfide-linked. Residue His-242 is part of the active site. Asn-260 is a glycosylation site (N-linked (GlcNAc...) asparagine). Cystine bridges form between Cys-349/Cys-355 and Cys-376/Cys-392.

This sequence belongs to the glycosyl hydrolase 28 family.

Its subcellular location is the secreted. It localises to the cell wall. The catalysed reaction is (1,4-alpha-D-galacturonosyl)n+m + H2O = (1,4-alpha-D-galacturonosyl)n + (1,4-alpha-D-galacturonosyl)m.. In terms of biological role, acts in concert with the pectinesterase, in the ripening process. Is involved in cell wall metabolism, specifically in polyuronide degradation. This chain is Polygalacturonase, found in Prunus persica (Peach).